Here is a 203-residue protein sequence, read N- to C-terminus: Thymidine kinase (203 aa).

ATP-binding positions include 9–16 (ATMNAGKT) and 87–90 (DEAQ). Glutamate 88 (proton acceptor) is an active-site residue. Zn(2+) is bound by residues cysteine 145, cysteine 147, cysteine 181, and histidine 184.

Belongs to the thymidine kinase family. As to quaternary structure, homotetramer.

Its subcellular location is the cytoplasm. The catalysed reaction is thymidine + ATP = dTMP + ADP + H(+). The polypeptide is Thymidine kinase (Mesorhizobium japonicum (strain LMG 29417 / CECT 9101 / MAFF 303099) (Mesorhizobium loti (strain MAFF 303099))).